The chain runs to 105 residues: Nitrogenase-stabilizing/protective protein NifW (105 aa).

It belongs to the NifW family. As to quaternary structure, homotrimer; associates with NifD.

Functionally, may protect the nitrogenase Fe-Mo protein from oxidative damage. In Rhodospirillum centenum (strain ATCC 51521 / SW), this protein is Nitrogenase-stabilizing/protective protein NifW.